The chain runs to 172 residues: Peptidyl-prolyl cis-trans isomerase (172 aa).

Residues 7–170 (FFDMAIAGNP…RPVTIADCGQ (164 aa)) enclose the PPIase cyclophilin-type domain.

Belongs to the cyclophilin-type PPIase family. As to expression, expressed in meristematic tissues, with higher levels in nodules.

Its subcellular location is the cytoplasm. The enzyme catalyses [protein]-peptidylproline (omega=180) = [protein]-peptidylproline (omega=0). With respect to regulation, binds cyclosporin A (CsA). CsA mediates some of its effects via an inhibitory action on PPIase. Its function is as follows. PPIases accelerate the folding of proteins. It catalyzes the cis-trans isomerization of proline imidic peptide bonds in oligopeptides. The chain is Peptidyl-prolyl cis-trans isomerase from Lupinus luteus (European yellow lupine).